The primary structure comprises 79 residues: ATP synthase subunit c (79 aa).

The next 2 helical transmembrane spans lie at 11–31 and 53–73; these read MAAA…IGIL and FFIV…LGLY.

Belongs to the ATPase C chain family. As to quaternary structure, F-type ATPases have 2 components, F(1) - the catalytic core - and F(0) - the membrane proton channel. F(1) has five subunits: alpha(3), beta(3), gamma(1), delta(1), epsilon(1). F(0) has three main subunits: a(1), b(2) and c(10-14). The alpha and beta chains form an alternating ring which encloses part of the gamma chain. F(1) is attached to F(0) by a central stalk formed by the gamma and epsilon chains, while a peripheral stalk is formed by the delta and b chains.

It localises to the cell inner membrane. F(1)F(0) ATP synthase produces ATP from ADP in the presence of a proton or sodium gradient. F-type ATPases consist of two structural domains, F(1) containing the extramembraneous catalytic core and F(0) containing the membrane proton channel, linked together by a central stalk and a peripheral stalk. During catalysis, ATP synthesis in the catalytic domain of F(1) is coupled via a rotary mechanism of the central stalk subunits to proton translocation. In terms of biological role, key component of the F(0) channel; it plays a direct role in translocation across the membrane. A homomeric c-ring of between 10-14 subunits forms the central stalk rotor element with the F(1) delta and epsilon subunits. The polypeptide is ATP synthase subunit c (Serratia proteamaculans (strain 568)).